The sequence spans 457 residues: Cysteine--tRNA ligase (457 aa).

A Zn(2+)-binding site is contributed by Cys-27. A 'HIGH' region motif is present at residues 29–39 (ITPQSEPHIGH). Cys-207, His-232, and Glu-236 together coordinate Zn(2+). The 'KMSKS' region signature appears at 265–269 (KMSKS). Residue Lys-268 participates in ATP binding.

Belongs to the class-I aminoacyl-tRNA synthetase family. As to quaternary structure, monomer. Zn(2+) is required as a cofactor.

The protein resides in the cytoplasm. The catalysed reaction is tRNA(Cys) + L-cysteine + ATP = L-cysteinyl-tRNA(Cys) + AMP + diphosphate. This chain is Cysteine--tRNA ligase, found in Dehalococcoides mccartyi (strain ATCC BAA-2100 / JCM 16839 / KCTC 5957 / BAV1).